The sequence spans 440 residues: Thymidine phosphorylase (440 aa).

The protein belongs to the thymidine/pyrimidine-nucleoside phosphorylase family. Homodimer.

It catalyses the reaction thymidine + phosphate = 2-deoxy-alpha-D-ribose 1-phosphate + thymine. It participates in pyrimidine metabolism; dTMP biosynthesis via salvage pathway; dTMP from thymine: step 1/2. In terms of biological role, the enzymes which catalyze the reversible phosphorolysis of pyrimidine nucleosides are involved in the degradation of these compounds and in their utilization as carbon and energy sources, or in the rescue of pyrimidine bases for nucleotide synthesis. In Burkholderia pseudomallei (strain 1106a), this protein is Thymidine phosphorylase.